Reading from the N-terminus, the 240-residue chain is Keratinocyte-associated protein 3 (240 aa).

4 consecutive transmembrane segments (helical) span residues 21–41 (VGLALILVGHVNLLLGAVLHG), 63–83 (VISVGSGLLSVSLGLVALLAS), 95–115 (LLALALVNLLLSAACSLGLLL), and 163–183 (ALALWIPSVFMSAAEAALSGY).

This sequence belongs to the TMEM54 family.

The protein resides in the membrane. This chain is Keratinocyte-associated protein 3 (KRTCAP3), found in Bos taurus (Bovine).